Consider the following 314-residue polypeptide: Small ribosomal subunit protein uS2c (314 aa).

The protein belongs to the universal ribosomal protein uS2 family.

The protein resides in the plastid. It is found in the chloroplast. This chain is Small ribosomal subunit protein uS2c (rps2), found in Stigeoclonium helveticum (Green alga).